We begin with the raw amino-acid sequence, 116 residues long: Large ribosomal subunit protein bL19 (116 aa).

The protein belongs to the bacterial ribosomal protein bL19 family.

In terms of biological role, this protein is located at the 30S-50S ribosomal subunit interface and may play a role in the structure and function of the aminoacyl-tRNA binding site. This chain is Large ribosomal subunit protein bL19, found in Pasteurella multocida (strain Pm70).